Consider the following 218-residue polypeptide: Serine/threonine-protein phosphatase 2 (218 aa).

Asp22, His24, Asp51, and Asn77 together coordinate Mn(2+). His78 functions as the Proton donor in the catalytic mechanism. Mn(2+) is bound at residue His187.

The protein belongs to the PPP phosphatase family. PP-1 subfamily. It depends on Mn(2+) as a cofactor.

It carries out the reaction O-phospho-L-seryl-[protein] + H2O = L-seryl-[protein] + phosphate. It catalyses the reaction O-phospho-L-threonyl-[protein] + H2O = L-threonyl-[protein] + phosphate. Inhibited by cadmium, copper, zinc when added activity but with less efficiency. Functionally, can hydrolyze phosphorylated Ser-, Thr- or Tyr-substrates in vitro. The natural substrate is unknown. The sequence is that of Serine/threonine-protein phosphatase 2 (pphB) from Salmonella typhimurium (strain LT2 / SGSC1412 / ATCC 700720).